The chain runs to 373 residues: Queuine tRNA-ribosyltransferase (373 aa).

D90 (proton acceptor) is an active-site residue. Substrate-binding positions include 90-94, D144, Q193, and G220; that span reads DSGGF. Residues 251-257 form an RNA binding region; the sequence is GVGTPED. D270 acts as the Nucleophile in catalysis. An RNA binding; important for wobble base 34 recognition region spans residues 275 to 279; the sequence is TRNAR. Positions 308, 310, 313, and 339 each coordinate Zn(2+).

Belongs to the queuine tRNA-ribosyltransferase family. In terms of assembly, homodimer. Within each dimer, one monomer is responsible for RNA recognition and catalysis, while the other monomer binds to the replacement base PreQ1. The cofactor is Zn(2+).

It catalyses the reaction 7-aminomethyl-7-carbaguanine + guanosine(34) in tRNA = 7-aminomethyl-7-carbaguanosine(34) in tRNA + guanine. It functions in the pathway tRNA modification; tRNA-queuosine biosynthesis. Its function is as follows. Catalyzes the base-exchange of a guanine (G) residue with the queuine precursor 7-aminomethyl-7-deazaguanine (PreQ1) at position 34 (anticodon wobble position) in tRNAs with GU(N) anticodons (tRNA-Asp, -Asn, -His and -Tyr). Catalysis occurs through a double-displacement mechanism. The nucleophile active site attacks the C1' of nucleotide 34 to detach the guanine base from the RNA, forming a covalent enzyme-RNA intermediate. The proton acceptor active site deprotonates the incoming PreQ1, allowing a nucleophilic attack on the C1' of the ribose to form the product. After dissociation, two additional enzymatic reactions on the tRNA convert PreQ1 to queuine (Q), resulting in the hypermodified nucleoside queuosine (7-(((4,5-cis-dihydroxy-2-cyclopenten-1-yl)amino)methyl)-7-deazaguanosine). This chain is Queuine tRNA-ribosyltransferase, found in Campylobacter jejuni subsp. jejuni serotype O:2 (strain ATCC 700819 / NCTC 11168).